The sequence spans 853 residues: DNA mismatch repair protein MutS (853 aa).

614 to 621 lines the ATP pocket; sequence GPNMGGKS.

The protein belongs to the DNA mismatch repair MutS family.

Its function is as follows. This protein is involved in the repair of mismatches in DNA. It is possible that it carries out the mismatch recognition step. This protein has a weak ATPase activity. The protein is DNA mismatch repair protein MutS of Escherichia coli (strain SMS-3-5 / SECEC).